Here is a 662-residue protein sequence, read N- to C-terminus: DNA ligase (662 aa).

NAD(+) contacts are provided by residues 31–35 (DSEYD), 79–80 (SL), and E119. K121 acts as the N6-AMP-lysine intermediate in catalysis. 4 residues coordinate NAD(+): R142, E176, K288, and K312. Residues C405, C408, C421, and C427 each coordinate Zn(2+). The 80-residue stretch at 583–662 (NIEKKLDNLT…DELNSFLDNL (80 aa)) folds into the BRCT domain.

Belongs to the NAD-dependent DNA ligase family. LigA subfamily. The cofactor is Mg(2+). Mn(2+) serves as cofactor.

It catalyses the reaction NAD(+) + (deoxyribonucleotide)n-3'-hydroxyl + 5'-phospho-(deoxyribonucleotide)m = (deoxyribonucleotide)n+m + AMP + beta-nicotinamide D-nucleotide.. Its function is as follows. DNA ligase that catalyzes the formation of phosphodiester linkages between 5'-phosphoryl and 3'-hydroxyl groups in double-stranded DNA using NAD as a coenzyme and as the energy source for the reaction. It is essential for DNA replication and repair of damaged DNA. This is DNA ligase from Finegoldia magna (strain ATCC 29328 / DSM 20472 / WAL 2508) (Peptostreptococcus magnus).